The following is a 559-amino-acid chain: Tryprostatin B 6-hydroxylase (559 aa).

3 helical membrane passes run 13-35, 48-65, and 82-104; these read PSVM…HLSY, YVRF…LLYA, and VSLL…RTLF. Residue C502 coordinates heme.

This sequence belongs to the cytochrome P450 family. Requires heme as cofactor.

The protein localises to the membrane. The enzyme catalyses tryprostatin B + reduced [NADPH--hemoprotein reductase] + O2 = 6-hydroxytryprostatin B + oxidized [NADPH--hemoprotein reductase] + H2O + H(+). Its pathway is mycotoxin biosynthesis. Its function is as follows. Cytochrome P450 monooxygenase; part of the gene cluster that mediates the biosynthesis of fumitremorgins, indole alkaloids that carry not only intriguing chemical structures, but also interesting biological and pharmacological activities. The biosynthesis of fumitremorgin-type alkaloids begins by condensation of the two amino acids L-tryptophan and L-proline to brevianamide F, catalyzed by the non-ribosomal peptide synthetase ftmA. Brevianamide F is then prenylated by the prenyltransferase ftmPT1/ftmB in the presence of dimethylallyl diphosphate, resulting in the formation of tryprostatin B. The three cytochrome P450 monooxygenases, ftmP450-1/ftmC, ftmP450-2/ftmE and ftmP450-3/FtmG, are responsible for the conversion of tryprostatin B to 6-hydroxytryprostatin B, tryprostatin A to fumitremorgin C and fumitremorgin C to 12,13-dihydroxyfumitremorgin C, respectively. The putative methyltransferase ftmMT/ftmD is expected for the conversion of 6-hydroxytryprostatin B to tryprostatin A. FtmPT2/FtmH catalyzes the prenylation of 12,13-dihydroxyfumitre-morgin C in the presence of dimethylallyl diphosphate, resulting in the formation of fumitremorgin B. Fumitremorgin B is further converted to verruculogen by ftmOx1/ftmF via the insertion of an endoperoxide bond between the two prenyl moieties. In some fungal species, verruculogen is further converted to fumitremorgin A, but the enzymes involved in this step have not been identified yet. In Aspergillus fumigatus (Neosartorya fumigata), this protein is Tryprostatin B 6-hydroxylase.